Consider the following 72-residue polypeptide: Translation initiation factor IF-1 (72 aa).

Residues 2-72 (AKEDVIEVEG…TRGRITYRYK (71 aa)) form the S1-like domain. Tyr-60 is subject to Phosphotyrosine.

It belongs to the IF-1 family. Component of the 30S ribosomal translation pre-initiation complex which assembles on the 30S ribosome in the order IF-2 and IF-3, IF-1 and N-formylmethionyl-tRNA(fMet); mRNA recruitment can occur at any time during PIC assembly.

The protein resides in the cytoplasm. One of the essential components for the initiation of protein synthesis. Stabilizes the binding of IF-2 and IF-3 on the 30S subunit to which N-formylmethionyl-tRNA(fMet) subsequently binds. Helps modulate mRNA selection, yielding the 30S pre-initiation complex (PIC). Upon addition of the 50S ribosomal subunit IF-1, IF-2 and IF-3 are released leaving the mature 70S translation initiation complex. This Halalkalibacterium halodurans (strain ATCC BAA-125 / DSM 18197 / FERM 7344 / JCM 9153 / C-125) (Bacillus halodurans) protein is Translation initiation factor IF-1.